Here is a 339-residue protein sequence, read N- to C-terminus: Very-long-chain 3-oxoacyl-CoA reductase (339 aa).

A helical membrane pass occupies residues Trp21 to Leu41. Residues Val67, Asn96, Asp121, Asn148, Tyr215, Lys219, Val248, and Ser250 each contribute to the NADP(+) site. The Proton acceptor role is filled by Tyr215. Lys219 acts as the Lowers pKa of active site Tyr in catalysis.

It belongs to the short-chain dehydrogenases/reductases (SDR) family.

The protein localises to the endoplasmic reticulum membrane. It carries out the reaction a very-long-chain (3R)-3-hydroxyacyl-CoA + NADP(+) = a very-long-chain 3-oxoacyl-CoA + NADPH + H(+). It functions in the pathway lipid metabolism; fatty acid biosynthesis. Its function is as follows. Component of the microsomal membrane bound fatty acid elongation system, which produces the 26-carbon very long-chain fatty acids (VLCFA) from palmitate. Catalyzes the reduction of the 3-ketoacyl-CoA intermediate that is formed in each cycle of fatty acid elongation. VLCFAs serve as precursors for ceramide and sphingolipids. The sequence is that of Very-long-chain 3-oxoacyl-CoA reductase from Coprinopsis cinerea (strain Okayama-7 / 130 / ATCC MYA-4618 / FGSC 9003) (Inky cap fungus).